Reading from the N-terminus, the 150-residue chain is Transthyretin (150 aa).

The first 20 residues, 1-20, serve as a signal peptide directing secretion; the sequence is MGSSSLLLVCLAGMVYLTEA. The residue at position 33 (C33) is a Sulfocysteine. L-thyroxine contacts are provided by K38, E77, and S140.

It belongs to the transthyretin family. In terms of assembly, homotetramer. Dimer of dimers. In the homotetramer, subunits assemble around a central channel that can accommodate two ligand molecules. Interacts with RBP4. In terms of processing, sulfonation of the reactive cysteine Cys-33 enhances the stability of the native conformation of TTR, avoiding misassembly of the protein leading to amyloid formation. In terms of tissue distribution, detected in choroid plexus (at protein level). Detected in choroid plexus.

The protein localises to the secreted. Thyroid hormone-binding protein. Probably transports thyroxine from the bloodstream to the brain. The protein is Transthyretin (TTR) of Tiliqua rugosa (Shingleback lizard).